A 245-amino-acid polypeptide reads, in one-letter code: MKVEDYFHDILGERKIHLTLIDPEEQTPEEAVEIAEAAIRGGTDGIMLGGSTTDSSELDATAGALRENIDVPIILFPGNTTGVSRHADAIFFMSLLNSNNPYWIIGAQALGAPAVKKMGIEALPMGYLVVEPGGTVGWVGDTKPVPRNKPDIAAAYAMAAEFLGMRLFYLEAGSGAPQHVPEEMISLVKRCTDQILIVGGGIRTGADAARVAGAGADIIVTGTVVENSSNVEDKIREIVEGMGSL.

Residues Asp-22 and Ser-51 each coordinate Mg(2+). Sn-glycerol 1-phosphate-binding positions include 169-175, 200-201, and 222-223; these read YLEAGSG, GG, and GT.

It belongs to the GGGP/HepGP synthase family. Group II subfamily. In terms of assembly, homopentamer. The cofactor is Mg(2+).

It localises to the cytoplasm. The catalysed reaction is sn-glycerol 1-phosphate + (2E,6E,10E)-geranylgeranyl diphosphate = sn-3-O-(geranylgeranyl)glycerol 1-phosphate + diphosphate. It participates in membrane lipid metabolism; glycerophospholipid metabolism. Its activity is regulated as follows. Inhibited by EDTA in vitro. In terms of biological role, prenyltransferase that catalyzes the transfer of the geranylgeranyl moiety of geranylgeranyl diphosphate (GGPP) to the C3 hydroxyl of sn-glycerol-1-phosphate (G1P). This reaction is the first ether-bond-formation step in the biosynthesis of archaeal membrane lipids. Cannot use sn-glycerol-3-phosphate (G3P) or dihydroxyacetonephosphate (DHAP) as substrate. This chain is Geranylgeranylglyceryl phosphate synthase, found in Methanothermobacter marburgensis (strain ATCC BAA-927 / DSM 2133 / JCM 14651 / NBRC 100331 / OCM 82 / Marburg) (Methanobacterium thermoautotrophicum).